A 356-amino-acid polypeptide reads, in one-letter code: Carbohydrate sulfotransferase 10 (356 aa).

Topologically, residues 1 to 6 are cytoplasmic; it reads MHHQWL. A helical; Signal-anchor for type II membrane protein transmembrane segment spans residues 7–27; the sequence is LLAACFWVIFMFMVASKFITL. The Lumenal segment spans residues 28-356; sequence TFKDPDVYSA…GYQKPDFLLN (329 aa). The N-linked (GlcNAc...) asparagine glycan is linked to asparagine 99. 3'-phosphoadenylyl sulfate is bound by residues 127–133 and 189–197; these read PKVGNTQ and RDPFERLIS. N-linked (GlcNAc...) asparagine glycosylation is found at asparagine 228 and asparagine 316.

This sequence belongs to the sulfotransferase 2 family. As to expression, in fetal tissues, it is predominantly expressed in brain, and weakly expressed in lung, kidney and liver. In adult, it is highly expressed in brain, testis, ovary, expressed at intermediate level in heart, pancreas, skeletal muscle, spleen and thymus, and weakly expressed in other tissues. In brain, it is expressed at higher level in the frontal lobe.

The protein resides in the golgi apparatus membrane. It carries out the reaction 3-O-{beta-D-GlcA-(1-&gt;[3)-alpha-D-Xyl-(1-&gt;3)-beta-D-GlcA-(1-&gt;](n)-4)-beta-D-Xyl-(1-&gt;4)-Rib-ol-P-Rib-ol-P-3-beta-D-GalNAc-(1-&gt;3)-beta-D-GlcNAc-(1-&gt;4)-O-6-P-alpha-D-Man}-L-Thr-[protein] + 3'-phosphoadenylyl sulfate = 3-O-{O-3-S-beta-D-GlcA-(1-&gt;[3)-alpha-D-Xyl-(1-&gt;3)-beta-D-GlcA-(1-&gt;](n)-4)-beta-D-Xyl-(1-&gt;4)-Rib-ol-P-Rib-ol-P-3-beta-D-GalNAc-(1-&gt;3)-beta-D-GlcNAc-(1-&gt;4)-O-6-P-alpha-D-Man}-L-Thr-[protein] + adenosine 3',5'-bisphosphate + H(+). The catalysed reaction is 17beta-estradiol 3-O-(beta-D-glucuronate) + 3'-phosphoadenylyl sulfate = 17beta-estradiol 3-O-(3-sulfo-beta-D-glucuronate) + adenosine 3',5'-bisphosphate + H(+). The enzyme catalyses 17beta-estradiol 3-O-(beta-D-glucuronate) 17-sulfate + 3'-phosphoadenylyl sulfate = 17beta-estradiol 3-O-(3-sulfo-beta-D-glucuronate) 17-sulfate + adenosine 3',5'-bisphosphate + H(+). It catalyses the reaction 17beta-estradiol 17-O-(beta-D-glucuronate) + 3'-phosphoadenylyl sulfate = 17beta-estradiol 17-O-(3-sulfo-beta-D-glucuronate) + adenosine 3',5'-bisphosphate + H(+). It carries out the reaction 16alpha,17beta-estriol 3-O-(beta-D-glucuronate) + 3'-phosphoadenylyl sulfate = 16alpha,17beta-estriol 3-O-(3-sulfo-beta-D-glucuronate) + adenosine 3',5'-bisphosphate + H(+). The catalysed reaction is 16alpha,17beta-estriol 16-O-(beta-D-glucuronate) + 3'-phosphoadenylyl sulfate = 16alpha,17beta-estriol 16-O-(3-sulfo-beta-D-glucuronate) + adenosine 3',5'-bisphosphate + H(+). The enzyme catalyses 16alpha,17beta-estriol 17-O-(beta-D-glucuronate) + 3'-phosphoadenylyl sulfate = 16alpha,17beta-estriol 17-O-(3-sulfo-beta-D-glucuronate) + adenosine 3',5'-bisphosphate + H(+). It catalyses the reaction estrone 3-O-(beta-D-glucuronate) + 3'-phosphoadenylyl sulfate = estrone 3-O-(3-sulfo-beta-D-glucuronate) + adenosine 3',5'-bisphosphate + H(+). It carries out the reaction 3alpha,20alpha-dihydroxy-5beta-pregnane 3-O-(beta-D-glucuronate) + 3'-phosphoadenylyl sulfate = 3alpha,20alpha-dihydroxy-5beta-pregnane 3-O-(3-sulfo-beta-D-glucuronate) + adenosine 3',5'-bisphosphate + H(+). The catalysed reaction is testosterone 17-O-(beta-D-glucuronate) + 3'-phosphoadenylyl sulfate = testosterone 17-O-(3-sulfo-beta-D-glucuronate) + adenosine 3',5'-bisphosphate + H(+). The enzyme catalyses 3beta-androst-5-en-17-one 3-O-(beta-D-glucuronate) + 3'-phosphoadenylyl sulfate = 3beta-androst-5-en-17-one 3-O-(3-sulfo-beta-D-glucuronate) + adenosine 3',5'-bisphosphate + H(+). It catalyses the reaction 3alpha,17alpha-dihydroxy-5beta-androstane-11-one-17beta-carboxylate 3-O-(beta-D-glucuronate) + 3'-phosphoadenylyl sulfate = 3alpha,17alpha-dihydroxy-5beta-androstane-11-one-17beta-carboxylate 3-O-(3-sulfo-beta-D-glucuronate) + adenosine 3',5'-bisphosphate + H(+). It carries out the reaction 3alpha-hydroxyetiocholan-17-one 3-O-(beta-D-glucuronate) + 3'-phosphoadenylyl sulfate = 3alpha-hydroxyetiocholan-17-one 3-O-(3-sulfo-beta-D-glucuronate) + adenosine 3',5'-bisphosphate + H(+). The protein operates within steroid metabolism. Its pathway is protein modification; carbohydrate sulfation. Functionally, catalyzes the transfer of sulfate from 3'-phosphoadenylyl sulfate (PAPS) to position 3 of terminal glucuronic acid of both protein- and lipid-linked oligosaccharides. Participates in biosynthesis of HNK-1 carbohydrate structure 3-O-sulfo-beta-D-GlcA-(1-&gt;3)-beta-D-Gal-(1-&gt;4)-D-GlcNAc-R, a sulfated glucuronyl-lactosaminyl residue carried by many neural recognition molecules, which is involved in cell interactions during ontogenetic development and in synaptic plasticity in the adult. May be indirectly involved in synapse plasticity of the hippocampus, via its role in HNK-1 biosynthesis. Sulfates terminal glucuronyl residue of the laminin globular (LG)-domain binding epitope on DAG1/alpha-dystroglycan and prevents further polymerization by LARGE1 glycosyltransferase. Likely defines the chain length of LG epitope, conferring binding specificity to extracellular matrix components. Plays a role in down-regulating the steroid hormones. Sulfates glucuronidated estrogens and androgens with an impact in hormone cycle and fertility. Has a preference for glucuronyl moiety at the 3-hydroxyl group of a sterol ring rather than the 17-hydroxyl group, showing high catalytic efficiency for 17beta-estradiol 3-O-(beta-D-glucuronate) and dehydroepiandrosterone 3-O-(beta-D-glucuronate) hormones. This chain is Carbohydrate sulfotransferase 10, found in Homo sapiens (Human).